We begin with the raw amino-acid sequence, 279 residues long: MKIIVAKNVGFCFGVERAIRTVENLLNEGKRVVTDGEIVHNRQVMEDLLKKGLKISSDPTDGDVFVVRAHGIPEEKLEKLRKIYPEVVDLTCPIVFQLFRTAREYSSRGKLIVFGKRDHPEMVALMGYAPAIVTKKPFKTEEKNVVFLSQTTSSLDEYREFVSEMIKMNNFEKAIYLNTICPVTVEREREVKELSKICDLSVVVGGKHSSNTGKLFRLASRNSRAIWVESPDEIPEDVVKYGTVCVFSGTSTPVSLIENVVRKLEEMEGKYYGTNGIQR.

Position 12 (cysteine 12) interacts with [4Fe-4S] cluster. (2E)-4-hydroxy-3-methylbut-2-enyl diphosphate contacts are provided by histidine 40 and histidine 70. 2 residues coordinate dimethylallyl diphosphate: histidine 40 and histidine 70. Positions 40 and 70 each coordinate isopentenyl diphosphate. Cysteine 92 is a binding site for [4Fe-4S] cluster. Position 119 (histidine 119) interacts with (2E)-4-hydroxy-3-methylbut-2-enyl diphosphate. Residue histidine 119 coordinates dimethylallyl diphosphate. Histidine 119 lines the isopentenyl diphosphate pocket. Residue glutamate 121 is the Proton donor of the active site. Threonine 151 is a (2E)-4-hydroxy-3-methylbut-2-enyl diphosphate binding site. Residue cysteine 181 coordinates [4Fe-4S] cluster. Residues serine 209, serine 210, asparagine 211, and serine 251 each coordinate (2E)-4-hydroxy-3-methylbut-2-enyl diphosphate. Serine 209, serine 210, asparagine 211, and serine 251 together coordinate dimethylallyl diphosphate. Isopentenyl diphosphate is bound by residues serine 209, serine 210, asparagine 211, and serine 251.

Belongs to the IspH family. [4Fe-4S] cluster serves as cofactor.

The enzyme catalyses isopentenyl diphosphate + 2 oxidized [2Fe-2S]-[ferredoxin] + H2O = (2E)-4-hydroxy-3-methylbut-2-enyl diphosphate + 2 reduced [2Fe-2S]-[ferredoxin] + 2 H(+). It catalyses the reaction dimethylallyl diphosphate + 2 oxidized [2Fe-2S]-[ferredoxin] + H2O = (2E)-4-hydroxy-3-methylbut-2-enyl diphosphate + 2 reduced [2Fe-2S]-[ferredoxin] + 2 H(+). Its pathway is isoprenoid biosynthesis; dimethylallyl diphosphate biosynthesis; dimethylallyl diphosphate from (2E)-4-hydroxy-3-methylbutenyl diphosphate: step 1/1. It participates in isoprenoid biosynthesis; isopentenyl diphosphate biosynthesis via DXP pathway; isopentenyl diphosphate from 1-deoxy-D-xylulose 5-phosphate: step 6/6. Catalyzes the conversion of 1-hydroxy-2-methyl-2-(E)-butenyl 4-diphosphate (HMBPP) into a mixture of isopentenyl diphosphate (IPP) and dimethylallyl diphosphate (DMAPP). Acts in the terminal step of the DOXP/MEP pathway for isoprenoid precursor biosynthesis. The protein is 4-hydroxy-3-methylbut-2-enyl diphosphate reductase of Thermotoga neapolitana (strain ATCC 49049 / DSM 4359 / NBRC 107923 / NS-E).